Reading from the N-terminus, the 178-residue chain is tRNA (cytidine(56)-2'-O)-methyltransferase (178 aa).

Leu-88 contacts S-adenosyl-L-methionine.

It belongs to the aTrm56 family. In terms of assembly, homodimer.

The protein localises to the cytoplasm. It carries out the reaction cytidine(56) in tRNA + S-adenosyl-L-methionine = 2'-O-methylcytidine(56) in tRNA + S-adenosyl-L-homocysteine + H(+). Its function is as follows. Specifically catalyzes the AdoMet-dependent 2'-O-ribose methylation of cytidine at position 56 in tRNAs. The chain is tRNA (cytidine(56)-2'-O)-methyltransferase from Methanopyrus kandleri (strain AV19 / DSM 6324 / JCM 9639 / NBRC 100938).